An 88-amino-acid chain; its full sequence is Large ribosomal subunit protein eL31 (88 aa).

The protein belongs to the eukaryotic ribosomal protein eL31 family.

The protein is Large ribosomal subunit protein eL31 (rpl31e) of Sulfurisphaera tokodaii (strain DSM 16993 / JCM 10545 / NBRC 100140 / 7) (Sulfolobus tokodaii).